The sequence spans 270 residues: 4-hydroxy-tetrahydrodipicolinate reductase (270 aa).

NAD(+) is bound by residues 9–14 (GAGGRM) and Glu35. Arg36 provides a ligand contact to NADP(+). Residues 99 to 101 (GTT) and 123 to 126 (ASNY) contribute to the NAD(+) site. His156 acts as the Proton donor/acceptor in catalysis. His157 serves as a coordination point for (S)-2,3,4,5-tetrahydrodipicolinate. Lys160 acts as the Proton donor in catalysis. 166-167 (GT) lines the (S)-2,3,4,5-tetrahydrodipicolinate pocket.

This sequence belongs to the DapB family.

The protein localises to the cytoplasm. The catalysed reaction is (S)-2,3,4,5-tetrahydrodipicolinate + NAD(+) + H2O = (2S,4S)-4-hydroxy-2,3,4,5-tetrahydrodipicolinate + NADH + H(+). The enzyme catalyses (S)-2,3,4,5-tetrahydrodipicolinate + NADP(+) + H2O = (2S,4S)-4-hydroxy-2,3,4,5-tetrahydrodipicolinate + NADPH + H(+). It participates in amino-acid biosynthesis; L-lysine biosynthesis via DAP pathway; (S)-tetrahydrodipicolinate from L-aspartate: step 4/4. Functionally, catalyzes the conversion of 4-hydroxy-tetrahydrodipicolinate (HTPA) to tetrahydrodipicolinate. The protein is 4-hydroxy-tetrahydrodipicolinate reductase of Actinobacillus succinogenes (strain ATCC 55618 / DSM 22257 / CCUG 43843 / 130Z).